The sequence spans 1413 residues: DNA-directed RNA polymerase subunit beta' (1413 aa).

4 residues coordinate Zn(2+): Cys-70, Cys-72, Cys-85, and Cys-88. Positions 460, 462, and 464 each coordinate Mg(2+). Residues Cys-819, Cys-893, Cys-900, and Cys-903 each coordinate Zn(2+).

Belongs to the RNA polymerase beta' chain family. The RNAP catalytic core consists of 2 alpha, 1 beta, 1 beta' and 1 omega subunit. When a sigma factor is associated with the core the holoenzyme is formed, which can initiate transcription. Mg(2+) is required as a cofactor. Requires Zn(2+) as cofactor.

The enzyme catalyses RNA(n) + a ribonucleoside 5'-triphosphate = RNA(n+1) + diphosphate. DNA-dependent RNA polymerase catalyzes the transcription of DNA into RNA using the four ribonucleoside triphosphates as substrates. In Burkholderia multivorans (strain ATCC 17616 / 249), this protein is DNA-directed RNA polymerase subunit beta'.